The following is a 242-amino-acid chain: Phosphatidylcholine synthase (242 aa).

The Cytoplasmic segment spans residues 1-15; sequence MKIFNYKRVPYAEMR. Residues 16–36 form a helical membrane-spanning segment; that stretch reads AFSVHILTASGSFLAFLGVVA. Residues 37–41 are Periplasmic-facing; it reads AAEHR. A helical transmembrane segment spans residues 42 to 62; it reads FIDMFWWLGLALLVDGIDGPI. Topologically, residues 63 to 76 are cytoplasmic; it reads ARKVRVKEVLPNWS. A helical transmembrane segment spans residues 77-97; sequence GDTLDNIIDYVTYVLLPAFAL. At 98–100 the chain is on the periplasmic side; sequence YQS. The chain crosses the membrane as a helical span at residues 101–121; it reads GMIGEPWSFVAAGMIVVSSAI. Residues 122-133 lie on the Cytoplasmic side of the membrane; that stretch reads YYADMGMKTDEY. The helical transmembrane segment at 134–154 threads the bilayer; the sequence is FFSGFPVVWNMIVFTLFVIDA. The Periplasmic portion of the chain corresponds to 155–159; the sequence is SATTA. The helical transmembrane segment at 160-180 threads the bilayer; sequence LTVVIVSVVLTFLPINFLHPV. Residues 181 to 187 lie on the Cytoplasmic side of the membrane; that stretch reads RVKRLRP. A helical membrane pass occupies residues 188–208; it reads LNLGVFFLWSALGIFSLLMHF. Topologically, residues 209–214 are periplasmic; sequence DTPEWA. Residues 215–235 form a helical membrane-spanning segment; that stretch reads LILFIVTGAYLYVIGAVLQFF. The Cytoplasmic portion of the chain corresponds to 236 to 242; it reads PALGRET.

The protein belongs to the CDP-alcohol phosphatidyltransferase class-I family. The cofactor is Mn(2+).

It is found in the cell inner membrane. It carries out the reaction a CDP-1,2-diacyl-sn-glycerol + choline = a 1,2-diacyl-sn-glycero-3-phosphocholine + CMP + H(+). In terms of biological role, condenses choline with CDP-diglyceride to produce phosphatidylcholine and CMP. In Rhizobium johnstonii (strain DSM 114642 / LMG 32736 / 3841) (Rhizobium leguminosarum bv. viciae), this protein is Phosphatidylcholine synthase.